We begin with the raw amino-acid sequence, 107 residues long: High mobility group protein HMG-I/HMG-Y (107 aa).

The interval 1–107 is disordered; that stretch reads MSESSSKSSQ…ISQESSEEEQ (107 aa). Residue Ser2 is modified to N-acetylserine. Lys7 is modified (N6-acetyllysine). Ser8 is subject to ADP-ribosylserine. Ser9 is subject to ADP-ribosylserine; alternate. Ser9 is modified (phosphoserine; alternate). N6-acetyllysine; alternate is present on Lys15. A Glycyl lysine isopeptide (Lys-Gly) (interchain with G-Cter in SUMO2); alternate cross-link involves residue Lys15. The span at 15-24 shows a compositional bias: basic and acidic residues; it reads KQEKDGTEKR. The segment at residues 21–31 is a DNA-binding region (a.T hook 1); the sequence is TEKRGRGRPRK. Position 26 is an asymmetric dimethylarginine; alternate (Arg26). The residue at position 26 (Arg26) is an Omega-N-methylarginine; alternate. Arg26 is subject to Symmetric dimethylarginine; alternate. A Phosphoserine; by HIPK2 and CDC2 modification is found at Ser36. Phosphothreonine is present on residues Thr39 and Val42. Phosphoserine occurs at positions 44 and 49. Residue Thr53 is modified to Phosphothreonine; by HIPK2 and CDC2. The a.T hook 2 DNA-binding region spans 53–63; the sequence is TPKRPRGRPKG. The interaction with HIPK2 stretch occupies residues 53–77; that stretch reads TPKRPRGRPKGSKNKGAAKTRKTTT. Basic residues predominate over residues 55 to 74; sequence KRPRGRPKGSKNKGAAKTRK. Asymmetric dimethylarginine; by PRMT6; alternate occurs at positions 58 and 60. Arg58 and Arg60 each carry omega-N-methylarginine; by PRMT6; alternate. A Phosphothreonine modification is found at Lys67. Thr78 is modified (phosphothreonine; by HIPK2 and CDC2). The a.T hook 3 DNA-binding region spans 78-89; that stretch reads TPGRKPRGRPKK. Residues 93-107 are compositionally biased toward acidic residues; that stretch reads EEEEGISQESSEEEQ. Ser99 carries the phosphoserine modification. 2 positions are modified to phosphoserine; by CK: Ser102 and Ser103.

It belongs to the HMGA family. In terms of assembly, interacts with HIPK2. Constitutively phosphorylated on two or three sites. Hyperphosphorylated at early stages of apoptosis, followed by dephosphorylation and methylation, which coincides with chromatin condensation. Isoforms HMG-I and HMG-Y can be phosphorylated by HIPK2. Phosphorylation of HMG-I at Ser-36, Thr-53 and Thr-78 and of HMG-Y at Thr-42 and Thr-67 by HIPK2 modulates DNA-binding affinity. Post-translationally, HMG-Y is not methylated. In terms of processing, methylation at Arg-58 is mutually exclusive with methylation at Arg-60.

The protein resides in the nucleus. It is found in the chromosome. Functionally, HMG-I/Y bind preferentially to the minor groove of A+T rich regions in double-stranded DNA. It is suggested that these proteins could function in nucleosome phasing and in the 3'-end processing of mRNA transcripts. They are also involved in the transcription regulation of genes containing, or in close proximity to A+T-rich regions. The sequence is that of High mobility group protein HMG-I/HMG-Y (HMGA1) from Homo sapiens (Human).